Reading from the N-terminus, the 219-residue chain is Imidazole glycerol phosphate synthase subunit HisH (219 aa).

A Glutamine amidotransferase type-1 domain is found at 4-216; it reads TVTVLDYGSG…VDSLPATGRN (213 aa). Cys82 serves as the catalytic Nucleophile. Active-site residues include His191 and Glu193.

Heterodimer of HisH and HisF.

It is found in the cytoplasm. It catalyses the reaction 5-[(5-phospho-1-deoxy-D-ribulos-1-ylimino)methylamino]-1-(5-phospho-beta-D-ribosyl)imidazole-4-carboxamide + L-glutamine = D-erythro-1-(imidazol-4-yl)glycerol 3-phosphate + 5-amino-1-(5-phospho-beta-D-ribosyl)imidazole-4-carboxamide + L-glutamate + H(+). The enzyme catalyses L-glutamine + H2O = L-glutamate + NH4(+). Its pathway is amino-acid biosynthesis; L-histidine biosynthesis; L-histidine from 5-phospho-alpha-D-ribose 1-diphosphate: step 5/9. IGPS catalyzes the conversion of PRFAR and glutamine to IGP, AICAR and glutamate. The HisH subunit catalyzes the hydrolysis of glutamine to glutamate and ammonia as part of the synthesis of IGP and AICAR. The resulting ammonia molecule is channeled to the active site of HisF. This chain is Imidazole glycerol phosphate synthase subunit HisH, found in Renibacterium salmoninarum (strain ATCC 33209 / DSM 20767 / JCM 11484 / NBRC 15589 / NCIMB 2235).